The chain runs to 352 residues: Phospho-N-acetylmuramoyl-pentapeptide-transferase (352 aa).

A run of 10 helical transmembrane segments spans residues 10–30 (YMFFSYISVRAGFAFFIALFL), 67–87 (TMGGLIFIFATIVASLLCADL), 88–108 (NNFYVIIGILCLVLFCTIGLV), 129–149 (LLSQFIASFICVFFLYIMGIN), 159–179 (YALFDGGIFMLALWILVIISS), 191–211 (GLATVPSIFSLLSLSAFLYLS), 227–247 (GLGELVVLSAALVGALMGFLW), 255–275 (VFMGDSGSLSIGAFLGYLGIV), 280–300 (ILLLLIGFVFVLETISVILQV), and 329–349 (KIIVRFWMIALLANIIALISI).

Belongs to the glycosyltransferase 4 family. MraY subfamily. Requires Mg(2+) as cofactor.

It localises to the cell inner membrane. The enzyme catalyses UDP-N-acetyl-alpha-D-muramoyl-L-alanyl-gamma-D-glutamyl-meso-2,6-diaminopimeloyl-D-alanyl-D-alanine + di-trans,octa-cis-undecaprenyl phosphate = di-trans,octa-cis-undecaprenyl diphospho-N-acetyl-alpha-D-muramoyl-L-alanyl-D-glutamyl-meso-2,6-diaminopimeloyl-D-alanyl-D-alanine + UMP. It functions in the pathway cell wall biogenesis; peptidoglycan biosynthesis. Functionally, catalyzes the initial step of the lipid cycle reactions in the biosynthesis of the cell wall peptidoglycan: transfers peptidoglycan precursor phospho-MurNAc-pentapeptide from UDP-MurNAc-pentapeptide onto the lipid carrier undecaprenyl phosphate, yielding undecaprenyl-pyrophosphoryl-MurNAc-pentapeptide, known as lipid I. The protein is Phospho-N-acetylmuramoyl-pentapeptide-transferase of Campylobacter lari (strain RM2100 / D67 / ATCC BAA-1060).